The primary structure comprises 126 residues: Small ribosomal subunit protein bS6 (126 aa).

Positions 104 to 126 are disordered; the sequence is QGAEKGKSSSKKVAAEAEASEEA.

It belongs to the bacterial ribosomal protein bS6 family.

Its function is as follows. Binds together with bS18 to 16S ribosomal RNA. This is Small ribosomal subunit protein bS6 from Coxiella burnetii (strain Dugway 5J108-111).